An 857-amino-acid chain; its full sequence is Protein sip-5 (857 aa).

Disordered stretches follow at residues 1–81, 157–231, 384–416, 466–517, 545–747, and 763–857; these read MGNA…ARRL, GLPI…FKPT, SESS…APNV, FGRR…GNRR, KAEK…PMFN, and HAGK…QVTL. 2 stretches are compositionally biased toward basic and acidic residues: residues 7–16 and 36–48; these read KESRGDDSGR and ESSR…RHDL. Positions 49–61 are enriched in low complexity; that stretch reads TGLLGRAAGGSSS. Basic and acidic residues predominate over residues 62-81; the sequence is HADERHERKETKQEREARRL. Polar residues-rich tracts occupy residues 179 to 191 and 199 to 208; these read ASPT…TNHL and SLSTASEHST. 3 stretches are compositionally biased toward low complexity: residues 209–230, 384–394, and 476–504; these read SNAG…PFKP, SESSVNSGSLS, and SASA…TANT. The segment covering 545–572 has biased composition (basic and acidic residues); that stretch reads KAEKEEQKEAKKREKEREKAEKKAEKAA. Composition is skewed to low complexity over residues 586-604 and 621-645; these read SRSG…PGLS and ASVA…ALAP. Residues 648 to 657 show a composition bias toward basic and acidic residues; it reads STKDKGKAVD. Low complexity predominate over residues 688-697; sequence SSASSASSSA. Over residues 698 to 712 the composition is skewed to polar residues; it reads VESNQGSYVPPSNLQ. Basic and acidic residues predominate over residues 783–799; that stretch reads ETAKSGEGAGEHVEHVL. 2 stretches are compositionally biased toward polar residues: residues 800-838 and 845-857; these read DSQT…STAS and NETT…QVTL.

It belongs to the SIP5 family.

The protein localises to the cytoplasm. May negatively regulate the snf-1 kinase. The protein is Protein sip-5 (sip-5) of Neurospora crassa (strain ATCC 24698 / 74-OR23-1A / CBS 708.71 / DSM 1257 / FGSC 987).